Consider the following 209-residue polypeptide: Type III pantothenate kinase (209 aa).

5 to 12 (DIGNSNAN) lines the ATP pocket. Residues Tyr68 and 72–75 (GIDR) each bind substrate. The Proton acceptor role is filled by Asp74. Asp89 contributes to the K(+) binding site. An ATP-binding site is contributed by Ser92. Residue Thr144 coordinates substrate.

It belongs to the type III pantothenate kinase family. In terms of assembly, homodimer. NH4(+) is required as a cofactor. The cofactor is K(+).

The protein localises to the cytoplasm. It catalyses the reaction (R)-pantothenate + ATP = (R)-4'-phosphopantothenate + ADP + H(+). The protein operates within cofactor biosynthesis; coenzyme A biosynthesis; CoA from (R)-pantothenate: step 1/5. Its function is as follows. Catalyzes the phosphorylation of pantothenate (Pan), the first step in CoA biosynthesis. The chain is Type III pantothenate kinase from Campylobacter jejuni subsp. jejuni serotype O:2 (strain ATCC 700819 / NCTC 11168).